The following is a 260-amino-acid chain: Ribosomal RNA small subunit methyltransferase G (260 aa).

S-adenosyl-L-methionine contacts are provided by residues Gly94, Phe99, 117-119, 145-146, and Arg164; these read DST and AE. The tract at residues 236 to 260 is disordered; it reads APTPPPYPRSPGTPKRQPLGQSNRP. Residues 237–246 are compositionally biased toward pro residues; the sequence is PTPPPYPRSP.

The protein belongs to the methyltransferase superfamily. RNA methyltransferase RsmG family.

Its subcellular location is the cytoplasm. Functionally, specifically methylates the N7 position of a guanine in 16S rRNA. The sequence is that of Ribosomal RNA small subunit methyltransferase G from Synechococcus sp. (strain JA-2-3B'a(2-13)) (Cyanobacteria bacterium Yellowstone B-Prime).